The sequence spans 764 residues: Phenylalanine--tRNA ligase beta subunit (764 aa).

In terms of domain architecture, tRNA-binding spans 38–148; sequence CIAPKNVVVG…GELVLGKELH (111 aa). The 81-residue stretch at 375–455 folds into the B5 domain; sequence LKDCALTFQL…RFVGIDNLVS (81 aa). Positions 433, 439, 442, and 443 each coordinate Mg(2+). The region spanning 673-763 is the FDX-ACB domain; that stretch reads SIYPSSVRDL…LEKEFNARLK (91 aa).

This sequence belongs to the phenylalanyl-tRNA synthetase beta subunit family. Type 1 subfamily. As to quaternary structure, tetramer of two alpha and two beta subunits. Mg(2+) serves as cofactor.

Its subcellular location is the cytoplasm. The catalysed reaction is tRNA(Phe) + L-phenylalanine + ATP = L-phenylalanyl-tRNA(Phe) + AMP + diphosphate + H(+). The protein is Phenylalanine--tRNA ligase beta subunit (pheT) of Helicobacter pylori (strain J99 / ATCC 700824) (Campylobacter pylori J99).